A 263-amino-acid chain; its full sequence is Glucosamine-6-phosphate deaminase (263 aa).

Aspartate 72 (proton acceptor; for enolization step) is an active-site residue. The active-site For ring-opening step is aspartate 141. Histidine 143 (proton acceptor; for ring-opening step) is an active-site residue. Catalysis depends on glutamate 148, which acts as the For ring-opening step.

The protein belongs to the glucosamine/galactosamine-6-phosphate isomerase family. NagB subfamily.

The enzyme catalyses alpha-D-glucosamine 6-phosphate + H2O = beta-D-fructose 6-phosphate + NH4(+). It participates in amino-sugar metabolism; N-acetylneuraminate degradation; D-fructose 6-phosphate from N-acetylneuraminate: step 5/5. Allosterically activated by N-acetylglucosamine 6-phosphate (GlcNAc6P). Its function is as follows. Catalyzes the reversible isomerization-deamination of glucosamine 6-phosphate (GlcN6P) to form fructose 6-phosphate (Fru6P) and ammonium ion. The sequence is that of Glucosamine-6-phosphate deaminase from Porphyromonas gingivalis (strain ATCC 33277 / DSM 20709 / CIP 103683 / JCM 12257 / NCTC 11834 / 2561).